Here is a 466-residue protein sequence, read N- to C-terminus: Gamma-aminobutyric acid receptor subunit gamma-2 (466 aa).

The N-terminal stretch at 1-38 (MSSPNTWSTGSTVYSPVFSQKMTLWILLLLSLYPGFTS) is a signal peptide. Over 39–274 (QKSDDDYEDY…FDLSRRMGYF (236 aa)) the chain is Extracellular. N-linked (GlcNAc...) asparagine glycosylation is found at N51 and N128. A disulfide bond links C189 and C203. N-linked (GlcNAc...) asparagine glycosylation occurs at N246. A helical membrane pass occupies residues 275 to 295 (TIQTYIPCTLIVVLSWVSFWI). Topologically, residues 296 to 301 (NKDAVP) are cytoplasmic. Residues 302 to 321 (ARTSLGITTVLTMTTLSTIA) traverse the membrane as a helical segment. The Extracellular portion of the chain corresponds to 322 to 333 (RKSLPKVSYVTA). The helical transmembrane segment at 334 to 358 (MDLFVSVCFIFVFSALVEYGTLHYF) threads the bilayer. The Cytoplasmic segment spans residues 359–442 (VSNRKPSKDK…IHIRIAKMDS (84 aa)). The chain crosses the membrane as a helical span at residues 443–463 (YARIFFPTAFCLFNLVYWVSY). Over 464–466 (LYL) the chain is Extracellular.

The protein belongs to the ligand-gated ion channel (TC 1.A.9) family. Gamma-aminobutyric acid receptor (TC 1.A.9.5) subfamily. GABRG2 sub-subfamily. In terms of assembly, heteropentamer, formed by a combination of alpha (GABRA1-6), beta (GABRB1-3), gamma (GABRG1-3), delta (GABRD), epsilon (GABRE), rho (GABRR1-3), pi (GABRP) and theta (GABRQ) chains, each subunit exhibiting distinct physiological and pharmacological properties. Interacts with GABARAP. Interacts with KIF21B. Identified in a complex of 720 kDa composed of LHFPL4, NLGN2, GABRA1, GABRB2, GABRG2 and GABRB3. Interacts with LHFPL4. Interacts with SHISA7; interaction leads to the regulation of GABA(A) receptor trafficking, channel deactivation kinetics and pharmacology. Palmitoylated by ZDHHC3/GODZ; required for the accumulation of GABA(A) receptors at the postsynaptic membrane of inhibitory GABAergic synapses. Post-translationally, glycosylated. In terms of tissue distribution, expressed in brain (at protein level). Expressed in lungs, in alveolar epithelium.

The protein localises to the postsynaptic cell membrane. It localises to the cell membrane. Its subcellular location is the cell projection. The protein resides in the dendrite. It is found in the cytoplasmic vesicle membrane. It carries out the reaction chloride(in) = chloride(out). Allosterically activated by benzodiazepines. Activated by pentobarbital. Inhibited by the antagonist bicuculline. Inhibited by zinc ions. Potentiated by histamine. Its function is as follows. Gamma subunit of the heteropentameric ligand-gated chloride channel gated by gamma-aminobutyric acid (GABA), a major inhibitory neurotransmitter in the brain. GABA-gated chloride channels, also named GABA(A) receptors (GABAAR), consist of five subunits arranged around a central pore and contain GABA active binding site(s) located at the alpha and beta subunit interface(s). When activated by GABA, GABAARs selectively allow the flow of chloride anions across the cell membrane down their electrochemical gradient. Gamma-2/GABRG2-containing GABAARs are found at both synaptic and extrasynaptic sites. Chloride influx into the postsynaptic neuron following GABAAR opening decreases the neuron ability to generate a new action potential, thereby reducing nerve transmission. GABAARs containing alpha-1 and beta-2 or -3 subunits exhibit synaptogenic activity; the gamma-2 subunit being necessary but not sufficient to induce rapid synaptic contacts formation. Extrasynaptic gamma-2-containing receptors contribute to the tonic GABAergic inhibition. GABAARs function also as histamine receptor where histamine binds at the interface of two neighboring beta subunits and potentiates GABA response in a gamma-2 subunit-controlled manner. This is Gamma-aminobutyric acid receptor subunit gamma-2 from Rattus norvegicus (Rat).